The following is a 96-amino-acid chain: Secreted RxLR effector protein 123 (96 aa).

Positions 1 to 22 are cleaved as a signal peptide; it reads MVGAYYVGIALLVAGGSQTAAG. The short motif at 49–70 is the RxLR-dEER element; the sequence is RFLRKSRNPKDNLMLSEANEER. The segment at 57 to 96 is disordered; sequence PKDNLMLSEANEERTPSSPSNSLTEFIVSEPITTNVMRTE. A compositionally biased stretch (polar residues) spans 87–96; it reads PITTNVMRTE.

It belongs to the RxLR effector family.

It localises to the secreted. The protein localises to the host nucleus. Its subcellular location is the host cytoplasm. In terms of biological role, secreted effector that dos not suppress the host cell death induced by cell death-inducing proteins. The chain is Secreted RxLR effector protein 123 from Plasmopara viticola (Downy mildew of grapevine).